Consider the following 121-residue polypeptide: Aspartate 1-decarboxylase (121 aa).

Catalysis depends on Ser-25, which acts as the Schiff-base intermediate with substrate; via pyruvic acid. At Ser-25 the chain carries Pyruvic acid (Ser). Thr-57 contributes to the substrate binding site. The active-site Proton donor is Tyr-58. Position 73–75 (73–75 (GAA)) interacts with substrate.

It belongs to the PanD family. In terms of assembly, heterooctamer of four alpha and four beta subunits. It depends on pyruvate as a cofactor. Post-translationally, is synthesized initially as an inactive proenzyme, which is activated by self-cleavage at a specific serine bond to produce a beta-subunit with a hydroxyl group at its C-terminus and an alpha-subunit with a pyruvoyl group at its N-terminus.

It localises to the cytoplasm. The enzyme catalyses L-aspartate + H(+) = beta-alanine + CO2. Its pathway is cofactor biosynthesis; (R)-pantothenate biosynthesis; beta-alanine from L-aspartate: step 1/1. Functionally, catalyzes the pyruvoyl-dependent decarboxylation of aspartate to produce beta-alanine. The polypeptide is Aspartate 1-decarboxylase (Wolinella succinogenes (strain ATCC 29543 / DSM 1740 / CCUG 13145 / JCM 31913 / LMG 7466 / NCTC 11488 / FDC 602W) (Vibrio succinogenes)).